A 774-amino-acid polypeptide reads, in one-letter code: 5-methyltetrahydropteroyltriglutamate--homocysteine methyltransferase (774 aa).

Residues Arg23–Lys26 and Lys123 each bind 5-methyltetrahydropteroyltri-L-glutamate. L-homocysteine contacts are provided by residues Ile446 to Ser448 and Glu499. Residues Ile446–Ser448 and Glu499 each bind L-methionine. Residues Arg530–Cys531 and Trp576 each bind 5-methyltetrahydropteroyltri-L-glutamate. An L-homocysteine-binding site is contributed by Asp614. Asp614 serves as a coordination point for L-methionine. Residue Glu620 coordinates 5-methyltetrahydropteroyltri-L-glutamate. Positions 656, 658, and 680 each coordinate Zn(2+). The active-site Proton donor is His709. Cys741 is a binding site for Zn(2+).

The protein belongs to the vitamin-B12 independent methionine synthase family. Zn(2+) is required as a cofactor.

It catalyses the reaction 5-methyltetrahydropteroyltri-L-glutamate + L-homocysteine = tetrahydropteroyltri-L-glutamate + L-methionine. The protein operates within amino-acid biosynthesis; L-methionine biosynthesis via de novo pathway; L-methionine from L-homocysteine (MetE route): step 1/1. Functionally, catalyzes the transfer of a methyl group from 5-methyltetrahydrofolate to homocysteine resulting in methionine formation. This Aliivibrio fischeri (strain MJ11) (Vibrio fischeri) protein is 5-methyltetrahydropteroyltriglutamate--homocysteine methyltransferase.